The primary structure comprises 294 residues: Oligopeptide transport system permease protein OppC (294 aa).

6 helical membrane passes run 27-47 (MIST…SMFL), 94-114 (IAFA…VITG), 127-147 (FTDF…VTII), 151-171 (NSWS…TRLI), 202-224 (IWPN…NIGL), and 260-280 (WTWV…IFIG). An ABC transmembrane type-1 domain is found at 88–280 (ARNSFNIAFA…IVVLAIIFIG (193 aa)).

This sequence belongs to the binding-protein-dependent transport system permease family. OppBC subfamily. In terms of assembly, the complex is composed of two ATP-binding proteins (OppD and OppF), two transmembrane proteins (OppB and OppC) and a solute-binding protein (OppA).

Its subcellular location is the cell membrane. Its function is as follows. Part of the ABC transporter complex OppABCDF involved in the uptake of oligopeptides. Probably responsible for the translocation of the substrate across the membrane. In Lactococcus lactis subsp. cremoris (strain SK11), this protein is Oligopeptide transport system permease protein OppC.